We begin with the raw amino-acid sequence, 600 residues long: Aspartate--tRNA(Asp/Asn) ligase (600 aa).

L-aspartate is bound at residue glutamate 183. An aspartate region spans residues glutamine 207–lysine 210. Arginine 229 contributes to the L-aspartate binding site. ATP contacts are provided by residues arginine 229–glutamate 231 and glutamine 238. L-aspartate is bound at residue histidine 456. An ATP-binding site is contributed by glutamate 490. Residue arginine 497 coordinates L-aspartate. An ATP-binding site is contributed by glycine 542–arginine 545.

Belongs to the class-II aminoacyl-tRNA synthetase family. Type 1 subfamily. Homodimer.

The protein localises to the cytoplasm. The catalysed reaction is tRNA(Asx) + L-aspartate + ATP = L-aspartyl-tRNA(Asx) + AMP + diphosphate. Aspartyl-tRNA synthetase with relaxed tRNA specificity since it is able to aspartylate not only its cognate tRNA(Asp) but also tRNA(Asn). Reaction proceeds in two steps: L-aspartate is first activated by ATP to form Asp-AMP and then transferred to the acceptor end of tRNA(Asp/Asn). This Moorella thermoacetica (strain ATCC 39073 / JCM 9320) protein is Aspartate--tRNA(Asp/Asn) ligase.